The following is a 662-amino-acid chain: Glycogen debranching enzyme (662 aa).

Aspartate 338 serves as the catalytic Nucleophile. The Proton donor role is filled by glutamate 373.

This sequence belongs to the glycosyl hydrolase 13 family.

It carries out the reaction Hydrolysis of (1-&gt;6)-alpha-D-glucosidic linkages to branches with degrees of polymerization of three or four glucose residues in limit dextrin.. It functions in the pathway glycan degradation; glycogen degradation. Functionally, removes maltotriose and maltotetraose chains that are attached by 1,6-alpha-linkage to the limit dextrin main chain, generating a debranched limit dextrin. In Yersinia pseudotuberculosis serotype I (strain IP32953), this protein is Glycogen debranching enzyme.